We begin with the raw amino-acid sequence, 148 residues long: Large ribosomal subunit protein bL9 (148 aa).

Belongs to the bacterial ribosomal protein bL9 family.

Its function is as follows. Binds to the 23S rRNA. This Clostridium perfringens (strain ATCC 13124 / DSM 756 / JCM 1290 / NCIMB 6125 / NCTC 8237 / Type A) protein is Large ribosomal subunit protein bL9.